We begin with the raw amino-acid sequence, 459 residues long: LETM1 domain-containing protein LETM2, mitochondrial (459 aa).

Residues 1–25 (MAFYSYNSFLAIFWTRLPGHSVHPP) constitute a mitochondrion transit peptide. The Mitochondrial intermembrane portion of the chain corresponds to 26–176 (CSHFPPLAFF…LLRTCADVFR (151 aa)). The tract at residues 88-114 (GKPQPEQIPEEPKATDPQPTKDDQTEV) is disordered. A compositionally biased stretch (basic and acidic residues) spans 97–111 (EEPKATDPQPTKDDQ). The helical transmembrane segment at 177 to 197 (LVPFVVFIIVPFMEFLIPVFL) threads the bilayer. The Mitochondrial matrix portion of the chain corresponds to 198–459 (KLFPDMLPST…QNSKANSKGA (262 aa)). The region spanning 220-440 (KMMGAKLEIA…PAPQLNGTKI (221 aa)) is the Letm1 RBD domain. Residues 403–459 (LPPSIETPKTNLGIPSSPPPESKEDITDPAPQLNGTKILQAKSQETSQNSKANSKGA) are disordered. Over residues 435 to 459 (LNGTKILQAKSQETSQNSKANSKGA) the composition is skewed to polar residues.

In terms of tissue distribution, testis and sperm.

It localises to the mitochondrion inner membrane. The sequence is that of LETM1 domain-containing protein LETM2, mitochondrial (Letm2) from Rattus norvegicus (Rat).